We begin with the raw amino-acid sequence, 201 residues long: Probable calcium-binding protein CML15 (201 aa).

The tract at residues M1–E55 is disordered. 4 consecutive EF-hand domains span residues A51–A86, V87–D122, A125–A160, and A161–F196. Positions 64, 66, 68, 70, 75, 100, 102, 104, 106, 111, 138, 140, 142, 149, 174, 176, 178, and 185 each coordinate Ca(2+).

In terms of biological role, potential calcium sensor. This is Probable calcium-binding protein CML15 (CML15) from Oryza sativa subsp. japonica (Rice).